A 352-amino-acid polypeptide reads, in one-letter code: Peptide chain release factor 1 (352 aa).

At Q230 the chain carries N5-methylglutamine.

It belongs to the prokaryotic/mitochondrial release factor family. Methylated by PrmC. Methylation increases the termination efficiency of RF1.

It is found in the cytoplasm. In terms of biological role, peptide chain release factor 1 directs the termination of translation in response to the peptide chain termination codons UAG and UAA. This is Peptide chain release factor 1 from Exiguobacterium sibiricum (strain DSM 17290 / CCUG 55495 / CIP 109462 / JCM 13490 / 255-15).